The primary structure comprises 478 residues: Septin-4 (478 aa).

The tract at residues 38 to 115 (VKDFSGNESC…RSPWGKLDPY (78 aa)) is disordered. Low complexity predominate over residues 95–108 (APAPLSPSARPRSP). Phosphoserine is present on residues Ser117 and Ser118. In terms of domain architecture, Septin-type G spans 141 to 414 (KGFDFTLMVA…ENYRAQCIQS (274 aa)). The G1 motif stretch occupies residues 151–158 (GESGLGKS). GTP-binding positions include 151 to 158 (GESGLGKS) and Thr185. A G3 motif region spans residues 208 to 211 (DTPG). The G4 motif stretch occupies residues 289-292 (AKAD). 290–298 (KADTLTPPE) is a binding site for GTP. A Phosphoserine modification is found at Ser325. GTP-binding residues include Gly348 and Arg363. The segment at 425–448 (RNKLTRESGTDLPIPAVPPGTDPE) is disordered. A Phosphoserine modification is found at Ser432. A Phosphothreonine modification is found at Thr434. A coiled-coil region spans residues 446-478 (DPETEKLIREKDEELRRMQEMLHKIQKQMKETY).

Belongs to the TRAFAC class TrmE-Era-EngA-EngB-Septin-like GTPase superfamily. Septin GTPase family. In terms of assembly, septins polymerize into heterooligomeric protein complexes that form filaments, and can associate with cellular membranes, actin filaments and microtubules. GTPase activity is required for filament formation. Interacts with SEPTIN8. Component of a septin core octameric complex consisting of SEPTIN12, SEPTIN7, SEPTIN6 and SEPTIN2 or SEPTIN4 in the order 12-7-6-2-2-6-7-12 or 12-7-6-4-4-6-7-12. Interacts with SEPTIN14 (via C-terminus). Interacts with DYRK1A. Interacts with SLC6A3/DAT and SNCA/alpha-synuclein. Interacts with STX1A; in the striatum. Interacts with XIAP (via BIR3 domain) following the induction of apoptosis. Interacts with AREL1 (via HECT domain); in the cytoplasm following induction of apoptosis. Ubiquitinated by AREL1. Post-translationally, phosphorylated by DYRK1A.

Its subcellular location is the cytoplasm. The protein resides in the cell projection. It is found in the cilium. It localises to the flagellum. The protein localises to the cytoplasmic vesicle. Its subcellular location is the secretory vesicle. The protein resides in the axon. It is found in the dendrite. It localises to the perikaryon. The protein localises to the synapse. Functionally, filament-forming cytoskeletal GTPase. Pro-apoptotic protein involved in LGR5-positive intestinal stem cell and Paneth cell expansion in the intestines, via its interaction with XIAP. May also play a role in the regulation of cell fate in the intestine. Positive regulator of apoptosis involved in hematopoietic stem cell homeostasis; via its interaction with XIAP. Negative regulator of repair and hair follicle regeneration in response to injury, due to inhibition of hair follicle stem cell proliferation, potentially via its interaction with XIAP. Plays an important role in male fertility and sperm motility. During spermiogenesis, essential for the establishment of the annulus (a fibrous ring structure connecting the midpiece and the principal piece of the sperm flagellum) which is a requisite for the structural and mechanical integrity of the sperm. Involved in the migration of cortical neurons and the formation of neuron leading processes during embryonic development. Required for dopaminergic metabolism in presynaptic autoreceptors; potentially via activity as a presynaptic scaffold protein. The polypeptide is Septin-4 (Pongo abelii (Sumatran orangutan)).